We begin with the raw amino-acid sequence, 631 residues long: NADPH oxidoreductase A (631 aa).

Residues 73 to 212 (ILILYGTEYG…CFDRYIDTVC (140 aa)) enclose the Flavodoxin-like domain. FMN is bound by residues 79–83 (TEYGL) and 160–191 (VLAL…KRFR). The FAD-binding FR-type domain maps to 247–480 (KKPYSSKLLV…INNNPDFRLP (234 aa)). FAD is bound at residue 249–299 (PYSSKLLVKRVLTKGDKVGIHLEFELGDSELKYVPGDALAILPDNAASEVS). 504-630 (QERKALGHTG…KEKRYQKDVW (127 aa)) contributes to the NADP(+) binding site.

FAD serves as cofactor. FMN is required as a cofactor.

Its function is as follows. Probable NADPH oxidoreductase that controls development beyond the mound stage. This chain is NADPH oxidoreductase A (redA), found in Dictyostelium discoideum (Social amoeba).